A 292-amino-acid polypeptide reads, in one-letter code: 1,4-dihydroxy-2-naphthoate octaprenyltransferase (292 aa).

6 helical membrane-spanning segments follow: residues 35–55 (AAVWWKALLALAVAVALVIGV), 101–121 (ALAGLVLALLSAPWLIAVGAI), 137–157 (GYAGFGELAVFVFFGPVAVLG), 166–186 (VDWVGLAQAVATGALSCSVLV), 220–240 (LLAVAGVLTFVLMLATPWCVV), and 271–291 (TGLAMLVWALAVAGALAFGQL).

This sequence belongs to the MenA family. Type 1 subfamily. Mg(2+) serves as cofactor.

The protein localises to the cell membrane. The catalysed reaction is an all-trans-polyprenyl diphosphate + 1,4-dihydroxy-2-naphthoate + H(+) = a 2-demethylmenaquinol + CO2 + diphosphate. The protein operates within quinol/quinone metabolism; menaquinone biosynthesis; menaquinol from 1,4-dihydroxy-2-naphthoate: step 1/2. Activity is abolished by EDTA. Inhibited by Ro 48-8071, which is non-competitive with regard to DHNA and competitive with regard to the isoprenyldiphosphate substrate. In terms of biological role, conversion of 1,4-dihydroxy-2-naphthoate (DHNA) to demethylmenaquinone (DMK). Can use a variety of allylic isoprenyl diphosphates as substrates but has a requirement for at least three isoprene units. This chain is 1,4-dihydroxy-2-naphthoate octaprenyltransferase, found in Mycobacterium tuberculosis (strain ATCC 25618 / H37Rv).